Here is a 259-residue protein sequence, read N- to C-terminus: Methionine aminopeptidase (259 aa).

His78 contributes to the substrate binding site. The a divalent metal cation site is built by Asp95, Asp106, and His169. Substrate is bound at residue His176. Residue Glu202 coordinates a divalent metal cation. Trp220 provides a ligand contact to substrate. Glu234 is an a divalent metal cation binding site.

It belongs to the peptidase M24A family. Methionine aminopeptidase type 1 subfamily. Monomer. Co(2+) is required as a cofactor. Zn(2+) serves as cofactor. The cofactor is Mn(2+). Requires Fe(2+) as cofactor.

The catalysed reaction is Release of N-terminal amino acids, preferentially methionine, from peptides and arylamides.. Functionally, removes the N-terminal methionine from nascent proteins. The N-terminal methionine is often cleaved when the second residue in the primary sequence is small and uncharged (Met-Ala-, Cys, Gly, Pro, Ser, Thr, or Val). Requires deformylation of the N(alpha)-formylated initiator methionine before it can be hydrolyzed. The protein is Methionine aminopeptidase of Rickettsia prowazekii (strain Madrid E).